A 425-amino-acid polypeptide reads, in one-letter code: Probable proline--tRNA ligase, mitochondrial (425 aa).

The protein belongs to the class-II aminoacyl-tRNA synthetase family.

It is found in the mitochondrion. It carries out the reaction tRNA(Pro) + L-proline + ATP = L-prolyl-tRNA(Pro) + AMP + diphosphate. This chain is Probable proline--tRNA ligase, mitochondrial, found in Schizosaccharomyces pombe (strain 972 / ATCC 24843) (Fission yeast).